The primary structure comprises 61 residues: Small ribosomal subunit protein uS14 (61 aa).

The Zn(2+) site is built by cysteine 24, cysteine 27, cysteine 40, and cysteine 43.

This sequence belongs to the universal ribosomal protein uS14 family. Zinc-binding uS14 subfamily. As to quaternary structure, part of the 30S ribosomal subunit. Contacts proteins S3 and S10. Requires Zn(2+) as cofactor.

Its function is as follows. Binds 16S rRNA, required for the assembly of 30S particles and may also be responsible for determining the conformation of the 16S rRNA at the A site. In Macrococcus caseolyticus (strain JCSC5402) (Macrococcoides caseolyticum), this protein is Small ribosomal subunit protein uS14.